The following is a 136-amino-acid chain: LEQVLEYYLGECLRYVNRGLGLFPDCDGMYLQLSYFVQLGALTLQHGGDQPVKLLVDHGALLAGLRSLARVLADALLAGNPEAAVAFYQFYGPARLQPLQPLVTALGNSPAQSIEYVQEPVRVPTDCDATCAQARL.

This is an uncharacterized protein from Pseudomonas amygdali pv. tabaci (Pseudomonas syringae pv. tabaci).